Reading from the N-terminus, the 180-residue chain is Mitochondrial inner membrane protease subunit 2 (180 aa).

The chain crosses the membrane as a helical span at residues 19–39; the sequence is LVGITLWVPVLMFVEQHVVSV. Catalysis depends on residues S46 and K92.

This sequence belongs to the peptidase S26 family. IMP2 subfamily. Heterodimer of 2 subunits, imp1 and imp2.

It localises to the mitochondrion inner membrane. Its function is as follows. Catalyzes the removal of transit peptides required for the targeting of proteins from the mitochondrial matrix, across the inner membrane, into the inter-membrane space. This is Mitochondrial inner membrane protease subunit 2 from Schizosaccharomyces pombe (strain 972 / ATCC 24843) (Fission yeast).